The sequence spans 265 residues: Insulin-like growth factor-binding protein 5 (265 aa).

Positions 1–21 (MEMLLPMCLLLVSLCLGQCQA) are cleaved as a signal peptide. In terms of domain architecture, IGFBP N-terminal spans 24–104 (SFVHCEPCDD…LHGRGVCLNL (81 aa)). 6 cysteine pairs are disulfide-bonded: Cys-28/Cys-54, Cys-31/Cys-56, Cys-39/Cys-57, Cys-46/Cys-60, Cys-68/Cys-81, and Cys-75/Cys-101. Basic and acidic residues predominate over residues 111–121 (SKIDRESREED). The segment at 111-137 (SKIDRESREEDPTTSETEDIYQSKHRG) is disordered. Residues 182 to 256 (MGPCRRQVET…IDYVNGDLQC (75 aa)) enclose the Thyroglobulin type-1 domain. Intrachain disulfides connect Cys-185–Cys-212, Cys-223–Cys-234, and Cys-236–Cys-256.

It localises to the secreted. Its function is as follows. IGF-binding proteins prolong the half-life of the IGFs and have been shown to either inhibit or stimulate the growth promoting effects of the IGFs on cell culture. They alter the interaction of IGFs with their cell surface receptors. Promotes anterior neural development by stimulating insulin growth factor (IGF) signaling via IGF receptors. The sequence is that of Insulin-like growth factor-binding protein 5 from Xenopus laevis (African clawed frog).